We begin with the raw amino-acid sequence, 410 residues long: Peptidase T (410 aa).

Residue His-79 coordinates Zn(2+). Asp-81 is a catalytic residue. Asp-142 lines the Zn(2+) pocket. The active-site Proton acceptor is Glu-176. Residues Glu-177, Asp-199, and His-381 each coordinate Zn(2+).

This sequence belongs to the peptidase M20B family. Zn(2+) serves as cofactor.

It is found in the cytoplasm. The enzyme catalyses Release of the N-terminal residue from a tripeptide.. Cleaves the N-terminal amino acid of tripeptides. This chain is Peptidase T, found in Bacillus anthracis (strain A0248).